We begin with the raw amino-acid sequence, 583 residues long: Isocitrate dehydrogenase kinase/phosphatase (583 aa).

Residues 315–321 (APGIRGM) and Lys-336 contribute to the ATP site. Residue Asp-371 is part of the active site.

This sequence belongs to the AceK family.

The protein localises to the cytoplasm. The enzyme catalyses L-seryl-[isocitrate dehydrogenase] + ATP = O-phospho-L-seryl-[isocitrate dehydrogenase] + ADP + H(+). In terms of biological role, bifunctional enzyme which can phosphorylate or dephosphorylate isocitrate dehydrogenase (IDH) on a specific serine residue. This is a regulatory mechanism which enables bacteria to bypass the Krebs cycle via the glyoxylate shunt in response to the source of carbon. When bacteria are grown on glucose, IDH is fully active and unphosphorylated, but when grown on acetate or ethanol, the activity of IDH declines drastically concomitant with its phosphorylation. The chain is Isocitrate dehydrogenase kinase/phosphatase from Salmonella heidelberg (strain SL476).